A 430-amino-acid polypeptide reads, in one-letter code: Agropine synthesis reductase (430 aa).

Residue 203-227 (LVSGSNRGVGKAIAEDLIAHGYRLS) participates in NAD(+) binding. Serine 333 provides a ligand contact to substrate. Catalysis depends on tyrosine 346, which acts as the Proton acceptor.

This sequence belongs to the short-chain dehydrogenases/reductases (SDR) family.

Its pathway is opine metabolism; mannopine biosynthesis. Its function is as follows. Reduces deoxy-fructosyl-glutamine to mannopine. The sequence is that of Agropine synthesis reductase (mas1) from Rhizobium rhizogenes (Agrobacterium rhizogenes).